The following is a 704-amino-acid chain: Polyribonucleotide nucleotidyltransferase (704 aa).

2 residues coordinate Mg(2+): aspartate 487 and aspartate 493. One can recognise a KH domain in the interval 554–613 (PRLLTIKIHPDKIREVIGKGGSTIQAITKETGTQIDIQDDGTIIIASVNAIAAQAAKSRI). Residues 623–691 (GRIYEGKVAK…KQGRIRLSIK (69 aa)) form the S1 motif domain.

The protein belongs to the polyribonucleotide nucleotidyltransferase family. As to quaternary structure, component of the RNA degradosome, which is a multiprotein complex involved in RNA processing and mRNA degradation. The cofactor is Mg(2+).

Its subcellular location is the cytoplasm. The enzyme catalyses RNA(n+1) + phosphate = RNA(n) + a ribonucleoside 5'-diphosphate. Its function is as follows. Involved in mRNA degradation. Catalyzes the phosphorolysis of single-stranded polyribonucleotides processively in the 3'- to 5'-direction. The protein is Polyribonucleotide nucleotidyltransferase of Xanthomonas campestris pv. campestris (strain B100).